The primary structure comprises 213 residues: tRNA (guanine-N(7)-)-methyltransferase (213 aa).

S-adenosyl-L-methionine is bound by residues E44, E69, D96, and D118. D118 is a catalytic residue. Substrate is bound at residue K122. The interaction with RNA stretch occupies residues 124–129 (RHEKRR). Residues D154 and 191–194 (TEYE) contribute to the substrate site.

Belongs to the class I-like SAM-binding methyltransferase superfamily. TrmB family. As to quaternary structure, homodimer.

It carries out the reaction guanosine(46) in tRNA + S-adenosyl-L-methionine = N(7)-methylguanosine(46) in tRNA + S-adenosyl-L-homocysteine. The protein operates within tRNA modification; N(7)-methylguanine-tRNA biosynthesis. In terms of biological role, catalyzes the formation of N(7)-methylguanine at position 46 (m7G46) in tRNA. The polypeptide is tRNA (guanine-N(7)-)-methyltransferase (Bacillus subtilis (strain 168)).